The chain runs to 900 residues: Iodate reductase subunit IdrA (900 aa).

Residues 1 to 21 form a disordered region; it reads MSENIKQGGAGTFMQAPQDSV. Residues cysteine 35, cysteine 38, and cysteine 42 each contribute to the [3Fe-4S] cluster site.

Belongs to the prokaryotic molybdopterin-containing oxidoreductase family. In terms of assembly, the iodate reductase (Idr) complex is composed of a molybdopterin-dependent iodate reductase (IdrA and IdrB subunits) and two associated peroxidases (IdrP1 and IdrP2). [3Fe-4S] cluster is required as a cofactor. Requires Mo-bis(molybdopterin guanine dinucleotide) as cofactor.

It localises to the periplasm. In terms of biological role, involved in iodate respiration. May accept electrons from cytochrome c551, and catalyze the reduction of iodate (IO(3)(-)) to produce the chemically unstable intermediate hypoiodous acid (HIO). This intermediate then undergoes abiotic disproportionation to yield two molecules of iodide (I(-)) and one molecule of iodate. The resultant iodate subsequently cycles back into the reductive pathway. The initial reduction of iodate may inadvertently produce low levels of incidental toxic H(2)O(2), which is detoxified by IdrP1 and IdrP2. In Denitromonas iodatirespirans, this protein is Iodate reductase subunit IdrA.